Reading from the N-terminus, the 360-residue chain is UDP-N-acetylglucosamine--N-acetylmuramyl-(pentapeptide) pyrophosphoryl-undecaprenol N-acetylglucosamine transferase (360 aa).

UDP-N-acetyl-alpha-D-glucosamine contacts are provided by residues 11-13 (TGG), N117, R160, S192, and Q294.

It belongs to the glycosyltransferase 28 family. MurG subfamily.

The protein localises to the cell inner membrane. The enzyme catalyses di-trans,octa-cis-undecaprenyl diphospho-N-acetyl-alpha-D-muramoyl-L-alanyl-D-glutamyl-meso-2,6-diaminopimeloyl-D-alanyl-D-alanine + UDP-N-acetyl-alpha-D-glucosamine = di-trans,octa-cis-undecaprenyl diphospho-[N-acetyl-alpha-D-glucosaminyl-(1-&gt;4)]-N-acetyl-alpha-D-muramoyl-L-alanyl-D-glutamyl-meso-2,6-diaminopimeloyl-D-alanyl-D-alanine + UDP + H(+). The protein operates within cell wall biogenesis; peptidoglycan biosynthesis. In terms of biological role, cell wall formation. Catalyzes the transfer of a GlcNAc subunit on undecaprenyl-pyrophosphoryl-MurNAc-pentapeptide (lipid intermediate I) to form undecaprenyl-pyrophosphoryl-MurNAc-(pentapeptide)GlcNAc (lipid intermediate II). This chain is UDP-N-acetylglucosamine--N-acetylmuramyl-(pentapeptide) pyrophosphoryl-undecaprenol N-acetylglucosamine transferase, found in Rickettsia felis (strain ATCC VR-1525 / URRWXCal2) (Rickettsia azadi).